Here is a 295-residue protein sequence, read N- to C-terminus: Acetaldehyde dehydrogenase (295 aa).

An NAD(+)-binding site is contributed by 11-14 (SGNI). The active-site Acyl-thioester intermediate is Cys127. NAD(+) is bound by residues 158-166 (SAGPGTRAN) and Asn270.

It belongs to the acetaldehyde dehydrogenase family.

The enzyme catalyses acetaldehyde + NAD(+) + CoA = acetyl-CoA + NADH + H(+). This chain is Acetaldehyde dehydrogenase (nbaJ), found in Geobacillus thermodenitrificans (strain NG80-2).